Reading from the N-terminus, the 274-residue chain is Bis(5'-nucleosyl)-tetraphosphatase, symmetrical (274 aa).

It belongs to the Ap4A hydrolase family.

The catalysed reaction is P(1),P(4)-bis(5'-adenosyl) tetraphosphate + H2O = 2 ADP + 2 H(+). Its function is as follows. Hydrolyzes diadenosine 5',5'''-P1,P4-tetraphosphate to yield ADP. The chain is Bis(5'-nucleosyl)-tetraphosphatase, symmetrical from Shewanella baltica (strain OS195).